A 371-amino-acid chain; its full sequence is Cytochrome b (371 aa).

Transmembrane regions (helical) follow at residues Phe25–Val45, Trp69–Ile90, Trp105–Leu125, and Phe170–Met190. His75 and His89 together coordinate heme b. 2 residues coordinate heme b: His174 and His188. His193 provides a ligand contact to a ubiquinone. 4 consecutive transmembrane segments (helical) span residues Tyr218 to Phe238, Leu280 to His300, Ile312 to Thr332, and Phe339 to Pro358.

Belongs to the cytochrome b family. As to quaternary structure, the cytochrome bc1 complex contains 3 respiratory subunits (MT-CYB, CYC1 and UQCRFS1), 2 core proteins (UQCRC1 and UQCRC2) and probably 6 low-molecular weight proteins. Heme b serves as cofactor.

The protein localises to the mitochondrion inner membrane. Component of the ubiquinol-cytochrome c reductase complex (complex III or cytochrome b-c1 complex) that is part of the mitochondrial respiratory chain. The b-c1 complex mediates electron transfer from ubiquinol to cytochrome c. Contributes to the generation of a proton gradient across the mitochondrial membrane that is then used for ATP synthesis. The polypeptide is Cytochrome b (MT-CYB) (Eryx colubrinus colubrinus).